Consider the following 595-residue polypeptide: Aspartate--tRNA ligase (595 aa).

Glu-180 contributes to the L-aspartate binding site. Positions 204–207 are aspartate; it reads QLFK. Arg-226 is a binding site for L-aspartate. ATP is bound by residues 226–228 and Gln-235; that span reads RDE. Position 454 (His-454) interacts with L-aspartate. Glu-488 serves as a coordination point for ATP. Residue Arg-495 participates in L-aspartate binding. 540-543 serves as a coordination point for ATP; that stretch reads GLDR.

It belongs to the class-II aminoacyl-tRNA synthetase family. Type 1 subfamily. Homodimer.

The protein resides in the cytoplasm. The catalysed reaction is tRNA(Asp) + L-aspartate + ATP = L-aspartyl-tRNA(Asp) + AMP + diphosphate. Its function is as follows. Catalyzes the attachment of L-aspartate to tRNA(Asp) in a two-step reaction: L-aspartate is first activated by ATP to form Asp-AMP and then transferred to the acceptor end of tRNA(Asp). The chain is Aspartate--tRNA ligase from Clostridium acetobutylicum (strain ATCC 824 / DSM 792 / JCM 1419 / IAM 19013 / LMG 5710 / NBRC 13948 / NRRL B-527 / VKM B-1787 / 2291 / W).